The chain runs to 150 residues: Small ribosomal subunit protein uS19y (150 aa).

Belongs to the universal ribosomal protein uS19 family.

It localises to the cytoplasm. The protein is Small ribosomal subunit protein uS19y (RPS15C) of Arabidopsis thaliana (Mouse-ear cress).